The chain runs to 392 residues: Protein DJ-1 homolog A (392 aa).

2 PfpI endopeptidase domains span residues lysine 6–phenylalanine 174 and proline 212–tyrosine 378.

This sequence belongs to the peptidase C56 family. Homodimer. Interacts with CSD1 and GPX2.

It localises to the cytoplasm. The protein localises to the cytosol. The protein resides in the nucleus. Functionally, involved in oxidative stress response. Confers protection against diverse stresses by binding both CSD1 and GPX2 and mediating the cytosolic activation of the Cu-Zn-dependent superoxide dismutase activity of CSD1. This chain is Protein DJ-1 homolog A (DJ1A), found in Arabidopsis thaliana (Mouse-ear cress).